Consider the following 639-residue polypeptide: MNLEKLSKPELLTLFSILEGELEARDLVIEALKAQHRDTFIEERYGKYNISDPLMALQRDFETLKEKNDGEKQPVCTNPLSILKVVMKQCKNMQERMLSQLAAAESRHRKVILDLEEERQRHAQDTAEGDDVTYMLEKERERLTQQLEFEKSQVKKFEKEQKKLSSQLEEERSRHKQLSSMLVLECKKATNKAAEEGQKAGELSLKLEKEKSRVSKLEEELAAERKRGLQTEAQVEKQLSEFDIEREQLRAKLNREENRTKTLKEEMESLKKIVKDLEASHQHSSPNEQLKKPVTVSKGTATEPLMLMSVFCQTESFPAERTHGSNIAKMTNTGLPGPATPAYSYAKTNGHCDPEIQTTRELTAGNNVENQVPPREKSVALAQEKPVENGGCPVGIETPVPMPSPLSSSGSSLSPSSTASSSLTSSPCSSPVLTKRLLGSSASSPGYQSSYQVGINQRFHAARHKFQSQADQDQQASGLQSPPSRDLSPTLIDNSAAKQLARNTVTQVLSRFTSQQGPIKPVSPNSSPFGTDYRNLANTANPRGDTSHSPTPGKVSSPLSPLSPGIKSPTIPRAERGNPPPIPPKKPGLTPSPSATTPLTKTHSQAASLTTAEDLASSCSSNTVVANGKDVELLLPTSS.

Residues 87–285 (MKQCKNMQER…DLEASHQHSS (199 aa)) are a coiled coil. Phosphoserine is present on residues Ser-284 and Ser-285. 3 disordered regions span residues 387–430 (VENG…PCSS), 463–490 (RHKF…LSPT), and 511–609 (RFTS…AASL). Composition is skewed to low complexity over residues 405 to 430 (PLSS…PCSS) and 467 to 477 (QSQADQDQQAS). 7 positions are modified to phosphoserine: Ser-481, Ser-488, Ser-523, Ser-527, Ser-560, Ser-563, and Ser-568. The segment covering 511-529 (RFTSQQGPIKPVSPNSSPF) has biased composition (polar residues). Thr-570 and Thr-590 each carry phosphothreonine. Residues 587 to 600 (PGLTPSPSATTPLT) show a composition bias toward low complexity. A Phosphoserine modification is found at Ser-592.

In terms of assembly, interacts with CTTN/cortactin; this interaction may redistribute CTTN to stress fibers. May form homomers. Associates with the core of STRIPAK complexes composed of PP2A catalytic and scaffolding subunits, the striatins (PP2A regulatory subunits), the striatin-associated proteins MOB4, STRIP1 and STRIP2, PDCD10 and members of the STE20 kinases, such as STK24 and STK26.

The protein resides in the cell projection. It localises to the lamellipodium. Its subcellular location is the cytoplasm. It is found in the cytoskeleton. The protein localises to the stress fiber. Functionally, regulates lamellipodial actin dynamics in a CTTN-dependent manner. Associates with core striatin-interacting phosphatase and kinase (STRIPAK) complex to form CTTNBP2NL-STRIPAK complexes. STRIPAK complexes have critical roles in protein (de)phosphorylation and are regulators of multiple signaling pathways including Hippo, MAPK, nuclear receptor and cytoskeleton remodeling. Different types of STRIPAK complexes are involved in a variety of biological processes such as cell growth, differentiation, apoptosis, metabolism and immune regulation. This chain is CTTNBP2 N-terminal-like protein, found in Homo sapiens (Human).